The chain runs to 636 residues: Nucleolin 2 (636 aa).

Disordered regions lie at residues 1–386, 458–481, and 544–636; these read MGKS…SKTL, ANER…SRTI, and SEIG…NDEE. 2 stretches are compositionally biased toward basic and acidic residues: residues 43–63 and 76–89; these read KELI…KKVE and EKTK…KDES. The segment covering 90–103 has biased composition (acidic residues); that stretch reads SSEEEDDSSSDEEI. The span at 104–118 shows a compositional bias: basic and acidic residues; the sequence is APAKKRPEPIKKAKV. 3 stretches are compositionally biased toward acidic residues: residues 122–133, 152–163, and 182–193; these read SSDDDSTSDEET and SSDDDSSSDEET. Residues 224-238 show a composition bias toward basic and acidic residues; that stretch reads TPAKKEPIVVKKDSS. 3 stretches are compositionally biased toward acidic residues: residues 267 to 278, 299 to 311, and 331 to 341; these read SSEEESSSDDEP, SSEE…ESDD, and SSDESSDESDK. Over residues 342–367 the composition is skewed to basic and acidic residues; sequence EESKDEKVTPKKKDSDVEMVDAEQKS. Residues 368 to 383 show a composition bias toward polar residues; sequence NAKQPKTPTNQTQGGS. RRM domains are found at residues 384–460 and 479–558; these read KTLF…LANE and RTIY…ESRP. Residues 464–481 show a composition bias toward polar residues; that stretch reads PRNSNPGRKGEGSQSRTI. 2 stretches are compositionally biased toward basic and acidic residues: residues 552–566 and 579–604; these read HVEE…EGRS and RHSD…DRGA. Positions 622-636 are enriched in polar residues; it reads MESSKGTKTVFNDEE.

Interacts with THAL in the nucleus. Expressed at low levels in flower buds.

The protein localises to the nucleus. Its subcellular location is the nucleolus. Its function is as follows. Involved in pre-rRNA processing and ribosome assembly. This chain is Nucleolin 2, found in Arabidopsis thaliana (Mouse-ear cress).